The chain runs to 457 residues: Glycine receptor subunit alpha-1 (457 aa).

A signal peptide spans M1 to A28. Residues A29–Y250 are Extracellular-facing. N66 is a glycosylation site (N-linked (GlcNAc...) asparagine). Residues R93 and S157 each coordinate glycine. A disulfide bond links C166 and C180. Residues E220 and D222 each coordinate Zn(2+). Cysteines 226 and 237 form a disulfide. Y230–F235 contributes to the strychnine binding site. T232 is a binding site for glycine. Residue H243 coordinates Zn(2+). The chain crosses the membrane as a helical span at residues Y251 to I272. At N273–A277 the chain is on the cytoplasmic side. The helical transmembrane segment at P278–S298 threads the bilayer. Over R299–K309 the chain is Extracellular. The chain crosses the membrane as a helical span at residues A310–A330. Residues A331 to K425 lie on the Cytoplasmic side of the membrane. Residues K391–E410 are disordered. The helical transmembrane segment at I426 to Y446 threads the bilayer. Topologically, residues K447–K457 are extracellular.

This sequence belongs to the ligand-gated ion channel (TC 1.A.9) family. Glycine receptor (TC 1.A.9.3) subfamily. GLRA1 sub-subfamily. Interacts with GLRB to form heteropentameric channels; this is probably the predominant form in vivo. Heteropentamer composed of four GLRA1 subunits and one GLRB subunit. Heteropentamer composed of two GLRA1 and three GLRB. Heteropentamer composed of three GLRA1 and two GLRB. Homopentamer (in vitro). Both homopentamers and heteropentamers form functional ion channels, but their characteristics are subtly different. As to expression, detected in spinal cord neurons. Detected in brain stem neurons. Detected at lower levels in hippocampus and cerebellum. Detected in the inner plexiform layer of the retina (at protein level).

It localises to the postsynaptic cell membrane. It is found in the synapse. The protein resides in the perikaryon. Its subcellular location is the cell projection. The protein localises to the dendrite. It localises to the cell membrane. The enzyme catalyses chloride(in) = chloride(out). Channel opening is triggered by extracellular glycine. Channel characteristics depend on the subunit composition; heteropentameric channels are activated by lower glycine levels and display faster desensitization. Channel opening is also triggered by taurine and beta-alanine. Inhibited by strychnine. Strychnine binding locks the channel in a closed conformation and prevents channel opening in response to extracellular glycine. Inhibited by picrotoxin. Channel activity is enhanced by 5 uM Zn(2+) and inhibited by 100 uM Zn(2+). Subunit of heteromeric glycine-gated chloride channels. Plays an important role in the down-regulation of neuronal excitability. Contributes to the generation of inhibitory postsynaptic currents. Channel activity is potentiated by ethanol. Potentiation of channel activity by intoxicating levels of ethanol contribute to the sedative effects of ethanol. This chain is Glycine receptor subunit alpha-1 (Glra1), found in Mus musculus (Mouse).